The chain runs to 232 residues: Protein INAPERTURATE POLLEN 1 homolog (232 aa).

As to quaternary structure, interacts with LECRKS7/DAF1.

It is found in the cytoplasm. Required for pollen aperture formation, male fertility and LECRKS7/DAF1 function. Seems to be involved in operculum protrusion. Participates in the modification of plasma membrane at future aperture sites, possibly by creating close contact between the plasma membrane and callose wall to prevent primexine formation and sporopollenin deposition. The protein is Protein INAPERTURATE POLLEN 1 homolog of Oryza sativa subsp. japonica (Rice).